We begin with the raw amino-acid sequence, 116 residues long: NADPH-dependent 7-cyano-7-deazaguanine reductase (116 aa).

Catalysis depends on Cys31, which acts as the Thioimide intermediate. Asp38 (proton donor) is an active-site residue. Substrate-binding positions include 53–55 and 72–73; these read IEL and YE.

The protein belongs to the GTP cyclohydrolase I family. QueF type 1 subfamily.

It localises to the cytoplasm. The catalysed reaction is 7-aminomethyl-7-carbaguanine + 2 NADP(+) = 7-cyano-7-deazaguanine + 2 NADPH + 3 H(+). Its pathway is tRNA modification; tRNA-queuosine biosynthesis. In terms of biological role, catalyzes the NADPH-dependent reduction of 7-cyano-7-deazaguanine (preQ0) to 7-aminomethyl-7-deazaguanine (preQ1). The sequence is that of NADPH-dependent 7-cyano-7-deazaguanine reductase from Chlorobium luteolum (strain DSM 273 / BCRC 81028 / 2530) (Pelodictyon luteolum).